The sequence spans 484 residues: Falcipain-2a (484 aa).

Over 1 to 35 (MDYNMDYAPHEVISQQGERFVDKYVDRKILKNKKS) the chain is Cytoplasmic. Positions 1 to 243 (MDYNMDYAPH…PLKNSKYLLD (243 aa)) are cleaved as a propeptide — activation peptide. A Bipartite vacuolar targeting signal 1 motif is present at residues 16-25 (QGERFVDKYV). Residues 36 to 56 (LLVIISLSVLSVVGFVLFYFT) form a helical; Signal-anchor for type II membrane protein membrane-spanning segment. Residues 57–484 (PNSRKSDLFK…GTDAFIPLIE (428 aa)) are Lumenal-facing. An N-linked (GlcNAc...) asparagine glycan is attached at Asn-67. The Bipartite vacuolar targeting signal 2 motif lies at 84 to 105 (KSPNGKKFIVSKIDEALSFYDS). The short motif at 244-260 (QMNYEEVIKKYKGNENF) is the Nose motif; required for the correct folding of the mature form element. 4 cysteine pairs are disulfide-bonded: Cys-282-Cys-323, Cys-316-Cys-357, Cys-342-Cys-362, and Cys-411-Cys-472. Residue Cys-285 is part of the active site. The active site involves His-417. The Arm motif; binds to host hemoglobin and required for the inhibitory interaction between the propeptide and the catalytic domain motif lies at 428 to 437 (EIVNPLTKKG). Asn-447 is an active-site residue.

Belongs to the peptidase C1 family. Component of the hemozoin formation complex (HFC) composed of falcipains FP2A and/or FP2B, plasmepsins PMII, PMIII/HAP and PMIV, heme detoxifying protein HDP and falcilysin FLN. The HFC complex is involved in hemoglobin degradation and detoxification of heme in the food vacuole during the asexual blood stage. Auto-cleaved to remove the propeptide.

The protein resides in the vacuole. It is found in the membrane. With respect to regulation, inhibited by cysteine protease inhibitor ICP. Inhibited by heme and heme analogs. Cysteine protease which cleaves native host hemoglobin and globin in the food vacuole during the asexual blood stage. The binding to host hemoglobin is pH-sensitive and only occurs at acidic pH. Cleaves ankyrin and protein 4.1, two components of host erythrocyte membrane cytoskeleton required for the stability of the erythrocyte membrane, and thus may be involved in parasite release. Preferentially cleaves substrates which have an arginine or lysine at the P1 position and a leucine or phenylalanine at the P2 position. The protein is Falcipain-2a of Plasmodium falciparum (isolate 3D7).